The chain runs to 177 residues: Adenine phosphoribosyltransferase (177 aa).

It belongs to the purine/pyrimidine phosphoribosyltransferase family. In terms of assembly, homodimer.

The protein resides in the cytoplasm. The enzyme catalyses AMP + diphosphate = 5-phospho-alpha-D-ribose 1-diphosphate + adenine. It functions in the pathway purine metabolism; AMP biosynthesis via salvage pathway; AMP from adenine: step 1/1. Catalyzes a salvage reaction resulting in the formation of AMP, that is energically less costly than de novo synthesis. The polypeptide is Adenine phosphoribosyltransferase (Chlorobium limicola (strain DSM 245 / NBRC 103803 / 6330)).